We begin with the raw amino-acid sequence, 76 residues long: Small ribosomal subunit protein bS16 (76 aa).

The protein belongs to the bacterial ribosomal protein bS16 family.

The protein is Small ribosomal subunit protein bS16 of Sulfurovum sp. (strain NBC37-1).